A 741-amino-acid polypeptide reads, in one-letter code: Catalase-peroxidase (741 aa).

The N-terminal stretch at 1 to 23 (MLKKIVTALGMSGMLLASSNAIA) is a signal peptide. The segment at residues 102 to 223 (WHDAGTYRIY…YAATQMGLIY (122 aa)) is a cross-link (tryptophyl-tyrosyl-methioninium (Trp-Tyr) (with M-249)). His103 serves as the catalytic Proton acceptor. A cross-link (tryptophyl-tyrosyl-methioninium (Tyr-Met) (with W-102)) is located at residues 223 to 249 (YVNPEGPDGKPDIKGAASEIRQAFRAM). Position 264 (His264) interacts with heme b.

The protein belongs to the peroxidase family. Peroxidase/catalase subfamily. In terms of assembly, homodimer or homotetramer. Requires heme b as cofactor. Formation of the three residue Trp-Tyr-Met cross-link is important for the catalase, but not the peroxidase activity of the enzyme.

It carries out the reaction H2O2 + AH2 = A + 2 H2O. The enzyme catalyses 2 H2O2 = O2 + 2 H2O. In terms of biological role, bifunctional enzyme with both catalase and broad-spectrum peroxidase activity. In Francisella tularensis subsp. tularensis (strain WY96-3418), this protein is Catalase-peroxidase.